We begin with the raw amino-acid sequence, 249 residues long: Aspartate/glutamate leucyltransferase (249 aa).

Belongs to the R-transferase family. Bpt subfamily.

It localises to the cytoplasm. The catalysed reaction is N-terminal L-glutamyl-[protein] + L-leucyl-tRNA(Leu) = N-terminal L-leucyl-L-glutamyl-[protein] + tRNA(Leu) + H(+). It catalyses the reaction N-terminal L-aspartyl-[protein] + L-leucyl-tRNA(Leu) = N-terminal L-leucyl-L-aspartyl-[protein] + tRNA(Leu) + H(+). In terms of biological role, functions in the N-end rule pathway of protein degradation where it conjugates Leu from its aminoacyl-tRNA to the N-termini of proteins containing an N-terminal aspartate or glutamate. This Brucella anthropi (strain ATCC 49188 / DSM 6882 / CCUG 24695 / JCM 21032 / LMG 3331 / NBRC 15819 / NCTC 12168 / Alc 37) (Ochrobactrum anthropi) protein is Aspartate/glutamate leucyltransferase.